The sequence spans 219 residues: Ribose-5-phosphate isomerase A (219 aa).

Residues 28–31, 81–84, and 94–97 each bind substrate; these read TGST, DGAD, and KGGG. E103 serves as the catalytic Proton acceptor. K121 serves as a coordination point for substrate.

The protein belongs to the ribose 5-phosphate isomerase family. As to quaternary structure, homodimer.

It catalyses the reaction aldehydo-D-ribose 5-phosphate = D-ribulose 5-phosphate. Its pathway is carbohydrate degradation; pentose phosphate pathway; D-ribose 5-phosphate from D-ribulose 5-phosphate (non-oxidative stage): step 1/1. In terms of biological role, catalyzes the reversible conversion of ribose-5-phosphate to ribulose 5-phosphate. This chain is Ribose-5-phosphate isomerase A, found in Pectobacterium carotovorum subsp. carotovorum (strain PC1).